A 258-amino-acid chain; its full sequence is Indole-3-glycerol phosphate synthase (258 aa).

It belongs to the TrpC family.

It carries out the reaction 1-(2-carboxyphenylamino)-1-deoxy-D-ribulose 5-phosphate + H(+) = (1S,2R)-1-C-(indol-3-yl)glycerol 3-phosphate + CO2 + H2O. Its pathway is amino-acid biosynthesis; L-tryptophan biosynthesis; L-tryptophan from chorismate: step 4/5. This chain is Indole-3-glycerol phosphate synthase, found in Geobacillus kaustophilus (strain HTA426).